The chain runs to 228 residues: N-acetyltransferase family 8 member 3 (228 aa).

A run of 2 helical transmembrane segments spans residues 36–56 and 58–78; these read MLLL…LFLA and GSWL…WLLA. The N-acetyltransferase domain maps to 61 to 217; the sequence is LLVLLSTLTL…RNSPMICLKY (157 aa).

Belongs to the camello family.

Its subcellular location is the nucleus membrane. The protein resides in the cytoplasm. The protein localises to the perinuclear region. The enzyme catalyses L-lysyl-[protein] + acetyl-CoA = N(6)-acetyl-L-lysyl-[protein] + CoA + H(+). Its function is as follows. Has histone acetyltransferase activity in vitro, with specificity for histone H4. This chain is N-acetyltransferase family 8 member 3, found in Rattus norvegicus (Rat).